The following is a 198-amino-acid chain: Guanylyl cyclase-activating protein 2 (198 aa).

Gly2 carries N-myristoyl glycine lipidation. EF-hand domains lie at 16–51 (DVAE…QDNH), 52–87 (EAAE…VLRG), 88–123 (KLEH…IYKL), and 139–174 (TPEE…DKWV). Ca(2+) is bound by residues Asp65, Asn67, Asp69, Thr71, Glu76, Asp101, Asp103, Asn105, Cys107, Glu112, Asp152, Asn154, Asp156, Gln158, and Glu163.

As to quaternary structure, undergoes dimerization at low calcium ions concentration, while the presence of calcium ions inhibits its dimerization. Dimerization correlates with its ability to activate GC. Retina and pineal gland.

Functionally, stimulates synthesis of cGMP in photoreceptors. Thought to mediate Ca(2+)-sensitive regulation of retinal guanylyl cyclase (GC), a key event in recovery of the dark state of rod photoreceptors following light exposure. This Gallus gallus (Chicken) protein is Guanylyl cyclase-activating protein 2 (GUCA1B).